The sequence spans 720 residues: Iron-sulfur clusters transporter ATM1, mitochondrial (720 aa).

The N-terminal 36 residues, M1–Y36, are a transit peptide targeting the mitochondrion. Residues I37–R129 lie on the Mitochondrial matrix side of the membrane. Positions R64–N77 are enriched in polar residues. A disordered region spans residues R64 to T102. Residues V130–F151 traverse the membrane as a helical segment. An ABC transmembrane type-1 domain is found at V130–Q421. Residues K152–T175 lie on the Mitochondrial intermembrane side of the membrane. A helical membrane pass occupies residues M176–F199. Over A200–V248 the chain is Mitochondrial matrix. The chain crosses the membrane as a helical span at residues L249–Y272. Q273 is a topological domain (mitochondrial intermembrane). Residues F274–F294 traverse the membrane as a helical segment. The Mitochondrial matrix portion of the chain corresponds to K295–A360. Glutathione contacts are provided by residues R300–R304 and N363–Q366. Residues F361–Y379 form a helical membrane-spanning segment. At M380–D394 the chain is on the mitochondrial intermembrane side. A helical transmembrane segment spans residues L395–Y416. G413 is a glutathione binding site. Over R417–D720 the chain is Mitochondrial matrix. An ABC transporter domain is found at I456–N692. ATP-binding positions include Y465 and G489–R500.

Belongs to the ABC transporter superfamily. ABCB family. Heavy Metal importer (TC 3.A.1.210) subfamily. As to quaternary structure, homodimer.

Its subcellular location is the mitochondrion inner membrane. Performs an essential function in the generation of cytoplasmic iron-sulfur proteins by mediating the ATP-dependent export of Fe/S cluster precursors synthesized by NFS1 and other mitochondrial proteins. Hydrolyzes ATP. Binds glutathione and may function by transporting a glutathione-conjugated iron-sulfur compound. The chain is Iron-sulfur clusters transporter ATM1, mitochondrial from Kluyveromyces lactis (strain ATCC 8585 / CBS 2359 / DSM 70799 / NBRC 1267 / NRRL Y-1140 / WM37) (Yeast).